The primary structure comprises 244 residues: rRNA adenine N-6-methyltransferase (244 aa).

The S-adenosyl-L-methionine site is built by Asn11, Ile13, Gly38, Glu59, Asp84, and Asn101.

It belongs to the class I-like SAM-binding methyltransferase superfamily. rRNA adenine N(6)-methyltransferase family.

The enzyme catalyses adenosine(2085) in 23S rRNA + 2 S-adenosyl-L-methionine = N(6)-dimethyladenosine(2085) in 23S rRNA + 2 S-adenosyl-L-homocysteine + 2 H(+). This protein produces a dimethylation of the adenine residue at position 2085 in 23S rRNA, resulting in reduced affinity between ribosomes and macrolide-lincosamide-streptogramin B antibiotics. The protein is rRNA adenine N-6-methyltransferase (ermC) of Staphylococcus aureus.